We begin with the raw amino-acid sequence, 161 residues long: Small ribosomal subunit protein eS6 (161 aa).

Residues 119–161 (VLLGEEEPEDADDDGDSDVDADEATDTDAGSEEDNDDDIADAE) form a disordered region. Positions 122–161 (GEEEPEDADDDGDSDVDADEATDTDAGSEEDNDDDIADAE) are enriched in acidic residues.

This sequence belongs to the eukaryotic ribosomal protein eS6 family.

The protein is Small ribosomal subunit protein eS6 of Haloquadratum walsbyi (strain DSM 16790 / HBSQ001).